A 312-amino-acid chain; its full sequence is Lipoyl synthase (312 aa).

The span at 1-10 (MNEAPAEKQK) shows a compositional bias: basic and acidic residues. A disordered region spans residues 1 to 20 (MNEAPAEKQKPQQGKRFSER). 7 residues coordinate [4Fe-4S] cluster: C51, C56, C62, C77, C81, C84, and S290. The 218-residue stretch at 63–280 (WSRKTATYLA…RSVGESLGLF (218 aa)) folds into the Radical SAM core domain.

This sequence belongs to the radical SAM superfamily. Lipoyl synthase family. It depends on [4Fe-4S] cluster as a cofactor.

Its subcellular location is the cytoplasm. The enzyme catalyses [[Fe-S] cluster scaffold protein carrying a second [4Fe-4S](2+) cluster] + N(6)-octanoyl-L-lysyl-[protein] + 2 oxidized [2Fe-2S]-[ferredoxin] + 2 S-adenosyl-L-methionine + 4 H(+) = [[Fe-S] cluster scaffold protein] + N(6)-[(R)-dihydrolipoyl]-L-lysyl-[protein] + 4 Fe(3+) + 2 hydrogen sulfide + 2 5'-deoxyadenosine + 2 L-methionine + 2 reduced [2Fe-2S]-[ferredoxin]. The protein operates within protein modification; protein lipoylation via endogenous pathway; protein N(6)-(lipoyl)lysine from octanoyl-[acyl-carrier-protein]: step 2/2. Its function is as follows. Catalyzes the radical-mediated insertion of two sulfur atoms into the C-6 and C-8 positions of the octanoyl moiety bound to the lipoyl domains of lipoate-dependent enzymes, thereby converting the octanoylated domains into lipoylated derivatives. The chain is Lipoyl synthase from Chlamydia felis (strain Fe/C-56) (Chlamydophila felis).